The sequence spans 87 residues: U3-theraphotoxin-Hhn1b (87 aa).

The N-terminal stretch at 1 to 24 is a signal peptide; sequence MVNMKASMFLTFAGLVLLFVVCYA. Positions 25–52 are excised as a propeptide; that stretch reads SESEEKEFPREMLSSIFAVDNDFKQEER. Disulfide bonds link C54–C67 and C61–C72.

The protein belongs to the neurotoxin 10 (Hwtx-1) family. 51 (Hntx-8) subfamily. Hntx-8 sub-subfamily. As to expression, expressed by the venom gland.

It is found in the secreted. Functionally, ion channel inhibitor. This is U3-theraphotoxin-Hhn1b from Cyriopagopus hainanus (Chinese bird spider).